A 153-amino-acid polypeptide reads, in one-letter code: MAPRTDAWSSALRLLSRREYSEAMLRERLQRKGFDSDQIEHALERCRSYNYVNDERFARIRARQLLASGRAVGPALMADLRHQRIGDSIARKAINDLEEEFSQAEILKDLCQRRFPDFDFQTADDRSRRRVFNYLRRRGFASAVLFQYFSEER.

The protein belongs to the RecX family.

Its subcellular location is the cytoplasm. Modulates RecA activity. This chain is Regulatory protein RecX, found in Syntrophotalea carbinolica (strain DSM 2380 / NBRC 103641 / GraBd1) (Pelobacter carbinolicus).